We begin with the raw amino-acid sequence, 413 residues long: Tyrosine--tRNA ligase (413 aa).

A 'HIGH' region motif is present at residues 59–68 (PTAPDIHLGH). The 'KMSKS' region signature appears at 243–247 (KMSKS). Lys246 serves as a coordination point for ATP. One can recognise an S4 RNA-binding domain in the interval 351–411 (LAIGQLLKQA…GKRRFARVTL (61 aa)).

It belongs to the class-I aminoacyl-tRNA synthetase family. TyrS type 2 subfamily. As to quaternary structure, homodimer.

Its subcellular location is the cytoplasm. It carries out the reaction tRNA(Tyr) + L-tyrosine + ATP = L-tyrosyl-tRNA(Tyr) + AMP + diphosphate + H(+). In terms of biological role, catalyzes the attachment of tyrosine to tRNA(Tyr) in a two-step reaction: tyrosine is first activated by ATP to form Tyr-AMP and then transferred to the acceptor end of tRNA(Tyr). The chain is Tyrosine--tRNA ligase from Burkholderia thailandensis (strain ATCC 700388 / DSM 13276 / CCUG 48851 / CIP 106301 / E264).